Consider the following 392-residue polypeptide: Succinyl-diaminopimelate desuccinylase (392 aa).

H78 is a Zn(2+) binding site. D80 is an active-site residue. D110 serves as a coordination point for Zn(2+). The active-site Proton acceptor is the E145. E146, E174, and H363 together coordinate Zn(2+).

This sequence belongs to the peptidase M20A family. DapE subfamily. As to quaternary structure, homodimer. The cofactor is Zn(2+). Requires Co(2+) as cofactor.

The enzyme catalyses N-succinyl-(2S,6S)-2,6-diaminopimelate + H2O = (2S,6S)-2,6-diaminopimelate + succinate. It participates in amino-acid biosynthesis; L-lysine biosynthesis via DAP pathway; LL-2,6-diaminopimelate from (S)-tetrahydrodipicolinate (succinylase route): step 3/3. In terms of biological role, catalyzes the hydrolysis of N-succinyl-L,L-diaminopimelic acid (SDAP), forming succinate and LL-2,6-diaminopimelate (DAP), an intermediate involved in the bacterial biosynthesis of lysine and meso-diaminopimelic acid, an essential component of bacterial cell walls. The polypeptide is Succinyl-diaminopimelate desuccinylase (Methylobacterium radiotolerans (strain ATCC 27329 / DSM 1819 / JCM 2831 / NBRC 15690 / NCIMB 10815 / 0-1)).